A 219-amino-acid chain; its full sequence is Large ribosomal subunit protein uL16 (219 aa).

It belongs to the universal ribosomal protein uL16 family. As to quaternary structure, component of the small ribosomal subunit. Mature ribosomes consist of a small (40S) and a large (60S) subunit. The 40S subunit contains about 33 different proteins and 1 molecule of RNA (18S). The 60S subunit contains about 49 different proteins and 3 molecules of RNA (25S, 5.8S and 5S).

The protein is Large ribosomal subunit protein uL16 (RPL10) of Solanum melongena (Eggplant).